Here is a 106-residue protein sequence, read N- to C-terminus: Insulin-like peptide 04 (106 aa).

An N-terminal signal peptide occupies residues 1-22 (MPRTFLVVLIYILAGFLCSTSA). Residues 23-37 (LRKVNEASGIKTDGS) constitute a propeptide that is removed on maturation. 3 disulfides stabilise this stretch: Cys45–Cys50, Cys46–Cys80, and Cys59–Cys68. The propeptide at 86 to 106 (RRKRSLTVDKREAKKFIRQRR) is c peptide.

The protein belongs to the insulin family.

Its subcellular location is the secreted. Insulin decreases blood glucose concentration. May have evolved to activate insulin receptors (INSR) in vertebrates. Molecular docking studies reveals unique interaction with the human insulin receptor. In vivo, insulin-like peptide injection reduces blood glucose levels in two models of zebrafish diabetes (streptozotocin- and glucose-induced). Also shorter swimming distance of zebrafish larvae, an effect which is not observed with human insulin. This is Insulin-like peptide 04 from Exaiptasia diaphana (Tropical sea anemone).